A 365-amino-acid polypeptide reads, in one-letter code: Paraneoplastic antigen Ma2 homolog (365 aa).

Position 2 is an N-acetylalanine (Ala-2). A disordered region spans residues 336-365; sequence EEEDAYFEQESREEPGEREGSGCWNNSRNN. The span at 344-355 shows a compositional bias: basic and acidic residues; it reads QESREEPGEREG.

It belongs to the PNMA family. As to expression, expressed in the cerebrum, cerebellum and testis.

The protein resides in the nucleus. Its subcellular location is the nucleolus. The polypeptide is Paraneoplastic antigen Ma2 homolog (Pnma2) (Mus musculus (Mouse)).